Here is a 130-residue protein sequence, read N- to C-terminus: Small ribosomal subunit protein uS8 (130 aa).

The protein belongs to the universal ribosomal protein uS8 family. Part of the 30S ribosomal subunit. Contacts proteins S5 and S12.

In terms of biological role, one of the primary rRNA binding proteins, it binds directly to 16S rRNA central domain where it helps coordinate assembly of the platform of the 30S subunit. The protein is Small ribosomal subunit protein uS8 of Actinobacillus pleuropneumoniae serotype 5b (strain L20).